The sequence spans 212 residues: Prolactin (212 aa).

An N-terminal signal peptide occupies residues 1 to 24 (MAHRETNGSKLFITVLCMVAACSA). 2 cysteine pairs are disulfide-bonded: C70–C185 and C202–C212.

Belongs to the somatotropin/prolactin family.

The protein localises to the secreted. The sequence is that of Prolactin (prl) from Sparus aurata (Gilthead sea bream).